The primary structure comprises 307 residues: Retron Ec86 putative ribosyltransferase/DNA-binding protein (307 aa).

Its function is as follows. Possible ribosyltransferase/DNA-binding component of antiviral defense system retron Ec86, composed of a non-coding RNA (ncRNA), a ribosyltransferase/DNA-binding protein and a reverse transcriptase (RT). Expression of the 3-gene retron confers protection against bacteriophages T5. At multiplicity of infection (MOI) of 0.02 cultures grow normally when infected with T5 without collapsing, at MOI 2 cultures enter growth stasis. This chain is Retron Ec86 putative ribosyltransferase/DNA-binding protein, found in Escherichia coli.